The chain runs to 397 residues: Argininosuccinate synthase (397 aa).

9 to 17 (AYSGGLDTS) lines the ATP pocket. Y86 serves as a coordination point for L-citrulline. Residue G116 participates in ATP binding. 3 residues coordinate L-aspartate: T118, N122, and D123. N122 is a binding site for L-citrulline. L-citrulline-binding residues include R126, S174, E259, and Y271.

The protein belongs to the argininosuccinate synthase family. Type 1 subfamily. As to quaternary structure, homotetramer.

It is found in the cytoplasm. It carries out the reaction L-citrulline + L-aspartate + ATP = 2-(N(omega)-L-arginino)succinate + AMP + diphosphate + H(+). The protein operates within amino-acid biosynthesis; L-arginine biosynthesis; L-arginine from L-ornithine and carbamoyl phosphate: step 2/3. The sequence is that of Argininosuccinate synthase from Lactococcus lactis subsp. cremoris (strain SK11).